Here is a 228-residue protein sequence, read N- to C-terminus: Ribosomal RNA small subunit methyltransferase G (228 aa).

S-adenosyl-L-methionine contacts are provided by residues glycine 92, phenylalanine 97, 115–117, 143–144, and arginine 156; these read EAT and AE.

Belongs to the methyltransferase superfamily. RNA methyltransferase RsmG family.

It localises to the cytoplasm. Functionally, specifically methylates the N7 position of a guanine in 16S rRNA. The sequence is that of Ribosomal RNA small subunit methyltransferase G from Thermosynechococcus vestitus (strain NIES-2133 / IAM M-273 / BP-1).